Consider the following 231-residue polypeptide: uncharacterized protein (231 aa).

4 helical membrane passes run 39 to 59 (FCIS…YGPF), 70 to 90 (ALSL…VPVI), 156 to 176 (AIIS…GGSI), and 189 to 206 (IVAI…NMFF).

It belongs to the FliR/MopE/SpaR family.

Its subcellular location is the cell membrane. This is an uncharacterized protein from Escherichia coli (strain K12).